Reading from the N-terminus, the 190-residue chain is Potassium-transporting ATPase KdpC subunit (190 aa).

The chain crosses the membrane as a helical span at residues 6-26; sequence PAVFLVLLLTLITGLLYPLLT. The segment at 67–88 is disordered; that stretch reads GRPSATSDRPYNPLASSGSNLA. Polar residues predominate over residues 69–88; sequence PSATSDRPYNPLASSGSNLA.

The protein belongs to the KdpC family. As to quaternary structure, the system is composed of three essential subunits: KdpA, KdpB and KdpC.

It is found in the cell inner membrane. Functionally, part of the high-affinity ATP-driven potassium transport (or Kdp) system, which catalyzes the hydrolysis of ATP coupled with the electrogenic transport of potassium into the cytoplasm. This subunit acts as a catalytic chaperone that increases the ATP-binding affinity of the ATP-hydrolyzing subunit KdpB by the formation of a transient KdpB/KdpC/ATP ternary complex. In Erwinia tasmaniensis (strain DSM 17950 / CFBP 7177 / CIP 109463 / NCPPB 4357 / Et1/99), this protein is Potassium-transporting ATPase KdpC subunit.